Reading from the N-terminus, the 281-residue chain is ATP phosphoribosyltransferase (281 aa).

It belongs to the ATP phosphoribosyltransferase family. Long subfamily. It depends on Mg(2+) as a cofactor.

It is found in the cytoplasm. It carries out the reaction 1-(5-phospho-beta-D-ribosyl)-ATP + diphosphate = 5-phospho-alpha-D-ribose 1-diphosphate + ATP. The protein operates within amino-acid biosynthesis; L-histidine biosynthesis; L-histidine from 5-phospho-alpha-D-ribose 1-diphosphate: step 1/9. With respect to regulation, feedback inhibited by histidine. In terms of biological role, catalyzes the condensation of ATP and 5-phosphoribose 1-diphosphate to form N'-(5'-phosphoribosyl)-ATP (PR-ATP). Has a crucial role in the pathway because the rate of histidine biosynthesis seems to be controlled primarily by regulation of HisG enzymatic activity. The polypeptide is ATP phosphoribosyltransferase (Natronomonas pharaonis (strain ATCC 35678 / DSM 2160 / CIP 103997 / JCM 8858 / NBRC 14720 / NCIMB 2260 / Gabara) (Halobacterium pharaonis)).